The primary structure comprises 137 residues: Small ribosomal subunit protein uS9 (137 aa).

It belongs to the universal ribosomal protein uS9 family.

The protein is Small ribosomal subunit protein uS9 (rps9) of Saccharolobus solfataricus (strain ATCC 35092 / DSM 1617 / JCM 11322 / P2) (Sulfolobus solfataricus).